Here is a 467-residue protein sequence, read N- to C-terminus: 3-isopropylmalate dehydratase large subunit (467 aa).

C348, C409, and C412 together coordinate [4Fe-4S] cluster.

This sequence belongs to the aconitase/IPM isomerase family. LeuC type 1 subfamily. Heterodimer of LeuC and LeuD. The cofactor is [4Fe-4S] cluster.

The enzyme catalyses (2R,3S)-3-isopropylmalate = (2S)-2-isopropylmalate. It participates in amino-acid biosynthesis; L-leucine biosynthesis; L-leucine from 3-methyl-2-oxobutanoate: step 2/4. Functionally, catalyzes the isomerization between 2-isopropylmalate and 3-isopropylmalate, via the formation of 2-isopropylmaleate. The chain is 3-isopropylmalate dehydratase large subunit from Thiobacillus denitrificans (strain ATCC 25259 / T1).